The chain runs to 224 residues: Cytidylate kinase (224 aa).

Position 11-19 (11-19 (GPAAAGKST)) interacts with ATP.

It belongs to the cytidylate kinase family. Type 1 subfamily.

Its subcellular location is the cytoplasm. It catalyses the reaction CMP + ATP = CDP + ADP. The catalysed reaction is dCMP + ATP = dCDP + ADP. This Listeria monocytogenes serotype 4a (strain HCC23) protein is Cytidylate kinase.